The primary structure comprises 308 residues: ATP synthase gamma chain (308 aa).

It belongs to the ATPase gamma chain family. F-type ATPases have 2 components, CF(1) - the catalytic core - and CF(0) - the membrane proton channel. CF(1) has five subunits: alpha(3), beta(3), gamma(1), delta(1), epsilon(1). CF(0) has three main subunits: a, b and c.

The protein resides in the cell membrane. Produces ATP from ADP in the presence of a proton gradient across the membrane. The gamma chain is believed to be important in regulating ATPase activity and the flow of protons through the CF(0) complex. This is ATP synthase gamma chain from Mycobacteroides abscessus (strain ATCC 19977 / DSM 44196 / CCUG 20993 / CIP 104536 / JCM 13569 / NCTC 13031 / TMC 1543 / L948) (Mycobacterium abscessus).